A 267-amino-acid polypeptide reads, in one-letter code: Taurine import ATP-binding protein TauB (267 aa).

In terms of domain architecture, ABC transporter spans 6 to 238 (FNEASLIYPA…DILAGAPASE (233 aa)). 43 to 50 (GRSGSGKT) is a binding site for ATP.

This sequence belongs to the ABC transporter superfamily. Taurine importer (TC 3.A.1.17.1) family. In terms of assembly, the complex is composed of two ATP-binding proteins (TauB), two transmembrane proteins (TauC) and a solute-binding protein (TauA).

Its subcellular location is the cell inner membrane. It catalyses the reaction taurine(out) + ATP + H2O = taurine(in) + ADP + phosphate + H(+). In terms of biological role, part of the ABC transporter complex TauABC involved in taurine import. Responsible for energy coupling to the transport system. In Sinorhizobium fredii (strain NBRC 101917 / NGR234), this protein is Taurine import ATP-binding protein TauB.